Reading from the N-terminus, the 245-residue chain is Orotidine 5'-phosphate decarboxylase (245 aa).

Substrate contacts are provided by residues Asp-22, Lys-44, 71–80 (DLKFHDIPNT), Thr-131, Arg-192, Gln-201, Gly-221, and Arg-222. Catalysis depends on Lys-73, which acts as the Proton donor.

The protein belongs to the OMP decarboxylase family. Type 1 subfamily. In terms of assembly, homodimer.

The catalysed reaction is orotidine 5'-phosphate + H(+) = UMP + CO2. It functions in the pathway pyrimidine metabolism; UMP biosynthesis via de novo pathway; UMP from orotate: step 2/2. In terms of biological role, catalyzes the decarboxylation of orotidine 5'-monophosphate (OMP) to uridine 5'-monophosphate (UMP). In Escherichia coli O6:K15:H31 (strain 536 / UPEC), this protein is Orotidine 5'-phosphate decarboxylase.